Consider the following 346-residue polypeptide: Nicotinate-nucleotide--dimethylbenzimidazole phosphoribosyltransferase (346 aa).

E312 functions as the Proton acceptor in the catalytic mechanism.

Belongs to the CobT family.

The enzyme catalyses 5,6-dimethylbenzimidazole + nicotinate beta-D-ribonucleotide = alpha-ribazole 5'-phosphate + nicotinate + H(+). The protein operates within nucleoside biosynthesis; alpha-ribazole biosynthesis; alpha-ribazole from 5,6-dimethylbenzimidazole: step 1/2. Catalyzes the synthesis of alpha-ribazole-5'-phosphate from nicotinate mononucleotide (NAMN) and 5,6-dimethylbenzimidazole (DMB). This is Nicotinate-nucleotide--dimethylbenzimidazole phosphoribosyltransferase from Cupriavidus necator (strain ATCC 17699 / DSM 428 / KCTC 22496 / NCIMB 10442 / H16 / Stanier 337) (Ralstonia eutropha).